Reading from the N-terminus, the 377-residue chain is MTTTTTTTMSTLPMVLVDEILSRVPITSLRSLRSTCKRWEAQSKTNLVGGKATARKSSYLGFILIGNKICSMKLDLNGGDDFVDTSVNQISAFDDFEISQLFHCDGLLLCVSNKHYYSNTVMVCNMYLGETRLIEHCCLLEGFDNFGSYAFGYDSSKNRNHKIFRKKLVSGGYEIYSFKSDSWKDLNVDLGESTELCELGSVSLKGNAYFSVITKHEEEELWENNLLCFDFTTESFGKFLSLPFDNVTAEEEFGIMVLSCVRDEHLAVLYQLDTLGIWISTEIEPNKVSWREFLQVDLYTLDGFPDAFTAGRFIVDEEKQVVVVFNEATEIDLNHGNAFIFGRDGYFTSFNVGDTPPQDFTSYVPSLASLQIEKTGG.

The F-box domain maps to 6 to 52 (TTTMSTLPMVLVDEILSRVPITSLRSLRSTCKRWEAQSKTNLVGGKA).

This Arabidopsis thaliana (Mouse-ear cress) protein is Putative F-box protein At3g13830.